We begin with the raw amino-acid sequence, 312 residues long: Pyridoxal kinase (312 aa).

Position 1 is an N-acetylmethionine (M1). Pyridoxal is bound by residues S12 and T47. T47 contributes to the pyridoxal 5'-phosphate binding site. A Phosphoserine modification is found at S59. D113 provides a ligand contact to ATP. Residue D113 coordinates Na(+). D118 contributes to the Mg(2+) binding site. T148 serves as a coordination point for Na(+). Residues 150–153 and 186–187 each bind ATP; these read NQFE and TS. Residue T186 participates in Na(+) binding. At S213 the chain carries Phosphoserine. ATP-binding positions include 226–228 and T233; that span reads VDA. Position 234–235 (234–235) interacts with pyridoxal 5'-phosphate; the sequence is GD. D235 (proton acceptor) is an active-site residue. At S285 the chain carries Phosphoserine.

This sequence belongs to the pyridoxine kinase family. In terms of assembly, homodimer. Requires Zn(2+) as cofactor. The cofactor is Mg(2+).

It is found in the cytoplasm. The protein localises to the cytosol. It catalyses the reaction pyridoxal + ATP = pyridoxal 5'-phosphate + ADP + H(+). It carries out the reaction pyridoxamine + ATP = pyridoxamine 5'-phosphate + ADP + H(+). The catalysed reaction is pyridoxine + ATP = pyridoxine 5'-phosphate + ADP + H(+). Its pathway is cofactor metabolism; pyridoxal 5'-phosphate salvage; pyridoxal 5'-phosphate from pyridoxal: step 1/1. It functions in the pathway cofactor metabolism; pyridoxal 5'-phosphate salvage; pyridoxine 5'-phosphate from pyridoxine: step 1/1. The protein operates within cofactor metabolism; pyridoxal 5'-phosphate salvage; pyridoxamine 5'-phosphate from pyridoxamine: step 1/1. With respect to regulation, activity is increased in the presence of K(+)or Na(+). Functionally, catalyzes the phosphorylation of the dietary vitamin B6 vitamers pyridoxal (PL), pyridoxine (PN) and pyridoxamine (PM) to form pyridoxal 5'-phosphate (PLP), pyridoxine 5'-phosphate (PNP) and pyridoxamine 5'-phosphate (PMP), respectively. PLP is the active form of vitamin B6, and acts as a cofactor for over 140 different enzymatic reactions. This Bos taurus (Bovine) protein is Pyridoxal kinase (PDXK).